Consider the following 647-residue polypeptide: NADP-dependent malic enzyme, chloroplastic (647 aa).

The transit peptide at 1 to 61 (MMSLNSSSVV…VDGAVKDVNA (61 aa)) directs the protein to the chloroplast. Catalysis depends on tyrosine 195, which acts as the Proton donor. Arginine 248 lines the NAD(+) pocket. Catalysis depends on lysine 266, which acts as the Proton acceptor. A divalent metal cation-binding residues include glutamate 338, aspartate 339, and aspartate 362. Aspartate 362 serves as a coordination point for NAD(+). 391–407 (LFLGAGEAGTGIAELIA) serves as a coordination point for NADP(+). Asparagine 503 lines the NAD(+) pocket.

This sequence belongs to the malic enzymes family. As to quaternary structure, homotetramer. Requires Mg(2+) as cofactor. Mn(2+) is required as a cofactor.

The protein resides in the plastid. The protein localises to the chloroplast. The catalysed reaction is (S)-malate + NADP(+) = pyruvate + CO2 + NADPH. The enzyme catalyses oxaloacetate + H(+) = pyruvate + CO2. It participates in photosynthesis; C3 acid pathway. The chloroplastic ME isoform decarboxylates malate shuttled from neighboring mesophyll cells. The CO(2) released is then refixed by ribulose-bisphosphate carboxylase. This pathway eliminates the photorespiratory loss of CO(2) that occurs in most plants. The polypeptide is NADP-dependent malic enzyme, chloroplastic (MODA) (Flaveria pringlei).